The following is a 177-amino-acid chain: Myosin regulatory light chain 2 (177 aa).

Positions 1–16 (MSRKSGSRSSSKRSKK) are enriched in basic residues. A disordered region spans residues 1-24 (MSRKSGSRSSSKRSKKSGGGSNVF). 6 igE-binding epitope regions span residues 13–30 (RSKK…FTQR), 22–48 (NVFD…DKDG), 49–66 (VIGK…GRIA), 58–90 (TFDE…LLNM), 79–99 (PAPI…TGES), and 118–141 (NIDC…QEAD). Residues 30-65 (RQVAEFKEGFQLMDRDKDGVIGKTDLRGTFDEIGRI) form the EF-hand 1 domain. Residues D43, D45, D47, and D54 each contribute to the Ca(2+) site. In terms of domain architecture, EF-hand 2 spans 135–170 (FSSQEADDALDQMDIDDGGKIDVQGVIQMLTAGGGD).

In terms of assembly, myosin is a hexamer of 2 heavy chains and 4 light chains. As to expression, expressed in tail muscle (at protein level).

The chain is Myosin regulatory light chain 2 from Penaeus vannamei (Whiteleg shrimp).